Reading from the N-terminus, the 464-residue chain is MSSSVYESIIQTRASVWGSTASGKAVVDSYWIHELGTGSQLVQTQLYSDSRSKVVLWLYCKVGIFPVKKKRFLSQHVYIPIFDDIDFSINIDNSVLALSVCSNTVNANGVKHQGHLKVLSPAQLHSIESIMNRSDITDRFQLQEKDIIPNDKYIEAANKGSLSCVKEHTYKIEMCYNQALGKVNVLSPNRNVHEWLYSFKPNFNQVESNNRTVNSLAVKSLLMSAENNIMPNSQASTDSHFKLSLWLRVPKVLKQVSIQKLFKVAGDETNKTFYLSIACIPNHNSVETALNITVICKHQLPIRKCKAPFELSMMFSDLKEPYNIVHDPSYPKGSVPMLWLETHTSLHKFFATNLQEDVIIYTLNNLELTPGKLDLGERTLNYSEDAYKRKYFLSKTLECLPSNTQTMSYLDSIQIPSWKIDFARGEIKISPQSISVAKSLLKLDLSGIKKKESKVKEAYASGSK.

This sequence belongs to the tospovirus NS-S protein family. In terms of assembly, interacts with host MYC2.

Functionally, multifunctional protein that plays two independent roles: viral suppressor of host RNAi (VSR) and viral inducer of host attractiveness to insect vectors (VIA). Acts as a suppressor of RNA-mediated gene silencing, also known as post-transcriptional gene silencing (PTGS), a mechanism of plant viral defense that limits the accumulation of viral RNAs. Also inhibits signal transduction by the phytohormone jasmonate, making the infected plant more attractive to aphids, which are the second host to play a role as a dissemination vector. Acts by binding to and inhibiting MYC2 transcription factor. The protein is Non-structural protein NS-S (NSS) of Frankliniella occidentalis (Western flower thrips).